A 92-amino-acid polypeptide reads, in one-letter code: Large ribosomal subunit protein eL43 (92 aa).

Zn(2+) contacts are provided by Cys39, Cys42, Cys57, and Cys60. The C4-type zinc-finger motif lies at 39–60; the sequence is CPNCGEDRVDRQGTGIWQCSYC.

Belongs to the eukaryotic ribosomal protein eL43 family. Putative zinc-binding subfamily. As to quaternary structure, part of the 50S ribosomal subunit. Contacts protein L2. Zn(2+) is required as a cofactor.

Functionally, binds to the 23S rRNA. This is Large ribosomal subunit protein eL43 from Haloarcula marismortui (strain ATCC 43049 / DSM 3752 / JCM 8966 / VKM B-1809) (Halobacterium marismortui).